The chain runs to 284 residues: NAD kinase (284 aa).

The Proton acceptor role is filled by Asp-65. Residues 65 to 66, 139 to 140, Arg-150, Arg-167, Asp-169, and Gln-239 contribute to the NAD(+) site; these read DG and ND.

It belongs to the NAD kinase family. A divalent metal cation serves as cofactor.

It is found in the cytoplasm. It carries out the reaction NAD(+) + ATP = ADP + NADP(+) + H(+). Functionally, involved in the regulation of the intracellular balance of NAD and NADP, and is a key enzyme in the biosynthesis of NADP. Catalyzes specifically the phosphorylation on 2'-hydroxyl of the adenosine moiety of NAD to yield NADP. The chain is NAD kinase from Desulfatibacillum aliphaticivorans.